The following is a 57-amino-acid chain: High-potential iron-sulfur protein (57 aa).

Cys21, Cys24, Cys33, and Cys46 together coordinate [4Fe-4S] cluster.

It belongs to the high-potential iron-sulfur protein (HiPIP) family. Homodimer.

Its function is as follows. Specific class of high-redox-potential 4Fe-4S ferredoxins. Functions in anaerobic electron transport in most purple and in some other photosynthetic bacteria and in at least one genus (Paracoccus) of halophilic, denitrifying bacteria. This Rhodopila globiformis (Rhodopseudomonas globiformis) protein is High-potential iron-sulfur protein (hip).